A 481-amino-acid chain; its full sequence is Zinc finger CCCH domain-containing protein 4 (481 aa).

A C3H1-type zinc finger spans residues 157–184 (RNRAHVCSFFIRGECTRGAECPYRHEMP). The RRM domain occupies 228 to 301 (KTLYVGGLNS…QRLKLTWGRP (74 aa)). A disordered region spans residues 329–481 (HNQPPPMQQY…DVSTATGSSQ (153 aa)). Pro residues predominate over residues 331-345 (QPPPMQQYYMHPPPA). 2 stretches are compositionally biased toward low complexity: residues 369-389 (AGGSSTENNGASSSSYMMPPH) and 399-410 (YMPSPYQQQYPP). Residues 423 to 444 (APPPAAYPYPQQPGPGSRPAPS) show a composition bias toward pro residues. A compositionally biased stretch (low complexity) spans 449 to 471 (SAISPDSAPAGSGAPSGSSQQAP). Positions 472–481 (DVSTATGSSQ) are enriched in polar residues.

This Arabidopsis thaliana (Mouse-ear cress) protein is Zinc finger CCCH domain-containing protein 4.